Here is a 677-residue protein sequence, read N- to C-terminus: Transmembrane and coiled-coil domain-containing protein 3 (677 aa).

Residues 1-22 form the signal peptide; the sequence is MKVLGRSFFWVLFPVLPWAVQA. Residues 124–204 adopt a coiled-coil conformation; the sequence is DYKDVVNMKE…EEEIEEHAFD (81 aa). 2 N-linked (GlcNAc...) asparagine glycosylation sites follow: N206 and N230. A run of 10 helical transmembrane segments spans residues 286–306, 317–337, 350–370, 416–436, 456–476, 498–518, 554–574, 578–598, 608–628, and 640–660; these read WLCT…GVLL, IVQV…LVGL, ISLQ…LLWG, VLLG…AVMP, ILVL…LCLV, EILI…TELL, FLAI…FVAY, VLVF…ALVL, YIKW…FVLG, and EVYL…PVLW.

The protein belongs to the monovalent cation:proton antiporter 2 (CPA2) transporter (TC 2.A.37) family. As to expression, expressed in the cornea, lens capsule and choroid-retinal pigment epithelium (at protein level).

The protein resides in the membrane. In terms of biological role, probable Na(+)/H(+) antiporter. In Homo sapiens (Human), this protein is Transmembrane and coiled-coil domain-containing protein 3 (TMCO3).